The chain runs to 670 residues: G-protein coupled receptor moody (670 aa).

Residues 1–40 (MSDETTISLEDGYPPLEALTTMVPPADATGFSQSLLTFAA) lie on the Extracellular side of the membrane. The chain crosses the membrane as a helical span at residues 41–61 (VMTFLIMIVGICGNLLTVVAL). Residues 62-69 (LKCPKVRN) lie on the Cytoplasmic side of the membrane. Residues 70-90 (VAAAFIISLCIADLLFCALVL) form a helical membrane-spanning segment. At 91–111 (PFQGLRFVQGTWRHGQVLCRL) the chain is on the extracellular side. Cysteines 109 and 188 form a disulfide. Residues 112–132 (IPFIQYGNIGVSLLCIAMITI) form a helical membrane-spanning segment. Residues 133 to 152 (NRYVMITHHGLYARIYKRHW) are Cytoplasmic-facing. A helical transmembrane segment spans residues 153-173 (IAVMIAACWLFSYGMQLPTLL). Topologically, residues 174 to 202 (GEWGRFGYDSRLQTCSIMTDDHGHSSKTT) are extracellular. The chain crosses the membrane as a helical span at residues 203–223 (LFITAFVIPCLVIIACYAKIF). The Cytoplasmic portion of the chain corresponds to 224–313 (WVVHKSEQRL…AKRNEWRITK (90 aa)). The disordered stretch occupies residues 258 to 302 (LPSGAECQPSNRVSSDSSSSFSIDVPETAPSGKQQPTRVKDQREV). Residues 267–279 (SNRVSSDSSSSFS) are compositionally biased toward low complexity. The helical transmembrane segment at 314 to 334 (MVLAIFLSFVVCYLPITIVKV) threads the bilayer. The Extracellular segment spans residues 335–345 (ADKNVEHPSLH). The chain crosses the membrane as a helical span at residues 346–366 (ICSYILLYLSACINPIIYVIM). Residues 367 to 670 (NKQYRKAYKT…LTAKMKFPKD (304 aa)) are Cytoplasmic-facing. Disordered regions lie at residues 461-490 (DLIS…GSNS), 562-622 (ELPP…YMNV), and 636-670 (TNAV…FPKD). Pro residues predominate over residues 564–584 (PPTPPATSAPTTPAPPPPSSP). The span at 585–598 (LHPLSTDSSTTTIS) shows a compositional bias: low complexity. Residues 646–660 (GPANTSATVSISGSK) are compositionally biased toward polar residues.

The protein belongs to the G-protein coupled receptor 1 family. In terms of tissue distribution, isoform A and isoform B are expressed in the head. Isoform B only is expressed in the body. Expressed in embryonic glial cells that are involved in ensheathment and insulation of the nervous system. Both isoforms are expressed in glia that insulate the larval and adult nervous system. Also expressed in the germ cells, the gut, and the heart.

It localises to the cell membrane. Its function is as follows. Isoform A and isoform B are required in glia to regulate the acute sensitivity to cocaine and to continuously maintain the proper blood-brain barrier (BBB) function. A moody-mediated signaling pathway functions in glia to regulate nervous system insulation and drug-related behaviors. Galphai and Galphao, and the regulator of G protein signaling, loco, are required in the surface glia to achieve effective insulation. The components function by regulating the cortical actin and thereby stabilizing the extended morphology of the surface glia, which in turn is necessary for the formation of septate junctions of sufficient length to achieve proper sealing of the nerve cord. The sequence is that of G-protein coupled receptor moody from Drosophila melanogaster (Fruit fly).